Here is a 366-residue protein sequence, read N- to C-terminus: Phospho-N-acetylmuramoyl-pentapeptide-transferase (366 aa).

Helical transmembrane passes span 3–23 (QIII…PILI), 55–75 (IAII…SYFA), 80–100 (FTAS…TGFA), 118–138 (AKLI…LRFP), 161–181 (IAFG…YVVV), 197–217 (LAAG…FWQF), 238–258 (IAVL…WNAA), 262–282 (IFMG…ISVV), 290–310 (VIIG…IAVF), and 341–361 (FWLI…GDWL).

The protein belongs to the glycosyltransferase 4 family. MraY subfamily. The cofactor is Mg(2+).

The protein localises to the cell membrane. The catalysed reaction is UDP-N-acetyl-alpha-D-muramoyl-L-alanyl-gamma-D-glutamyl-meso-2,6-diaminopimeloyl-D-alanyl-D-alanine + di-trans,octa-cis-undecaprenyl phosphate = di-trans,octa-cis-undecaprenyl diphospho-N-acetyl-alpha-D-muramoyl-L-alanyl-D-glutamyl-meso-2,6-diaminopimeloyl-D-alanyl-D-alanine + UMP. Its pathway is cell wall biogenesis; peptidoglycan biosynthesis. Its function is as follows. Catalyzes the initial step of the lipid cycle reactions in the biosynthesis of the cell wall peptidoglycan: transfers peptidoglycan precursor phospho-MurNAc-pentapeptide from UDP-MurNAc-pentapeptide onto the lipid carrier undecaprenyl phosphate, yielding undecaprenyl-pyrophosphoryl-MurNAc-pentapeptide, known as lipid I. This is Phospho-N-acetylmuramoyl-pentapeptide-transferase from Corynebacterium efficiens (strain DSM 44549 / YS-314 / AJ 12310 / JCM 11189 / NBRC 100395).